The chain runs to 88 residues: Small integral membrane protein 13 (88 aa).

Residues 10–30 (LVFVATLLIVLLLMVCGWYFV) form a helical membrane-spanning segment. Over residues 48–60 (TGSQEGDNEQPSG) the composition is skewed to polar residues. Residues 48-88 (TGSQEGDNEQPSGSEAEEDPSASPHKMRSARQRRPPVDDGH) are disordered. Residues Ser59, Ser61, and Ser70 each carry the phosphoserine modification. Over residues 72 to 81 (HKMRSARQRR) the composition is skewed to basic residues.

The protein belongs to the SMIM13 family.

It localises to the membrane. The protein is Small integral membrane protein 13 (Smim13) of Rattus norvegicus (Rat).